Consider the following 311-residue polypeptide: MGKENCTTVAEFILLGLSDVPELRVCLFLLFLLIYGVTLLANLGMIALIQVSSRLHTPMYFFLSHLSSVDFCYSSIIVPKMLANIFNKDKAISFLGCMVQFYLFCTCVVTEVFLLAVMAYDRFVAICNPLLYTVTMSWKVRVELASCCYFCGTVCSLIHLCLALRIPFYRSNVINHFFCDLPPVLSLACSDITVNETLLFLVATLNESVTIMIILTSYLLILTTILKMGSAEGRHKAFSTCASHLTAITVFHGTVLSIYCRPSSGNSGDADKVATVFYTVVIPMLNSVIYSLRNKDVKEALRKVMGSKIHS.

Residues 1 to 25 (MGKENCTTVAEFILLGLSDVPELRV) lie on the Extracellular side of the membrane. An N-linked (GlcNAc...) asparagine glycan is attached at Asn-5. Residues 26 to 46 (CLFLLFLLIYGVTLLANLGMI) form a helical membrane-spanning segment. Residues 47–54 (ALIQVSSR) lie on the Cytoplasmic side of the membrane. The helical transmembrane segment at 55 to 75 (LHTPMYFFLSHLSSVDFCYSS) threads the bilayer. Over 76–99 (IIVPKMLANIFNKDKAISFLGCMV) the chain is Extracellular. Cysteines 97 and 189 form a disulfide. The chain crosses the membrane as a helical span at residues 100-120 (QFYLFCTCVVTEVFLLAVMAY). Residues 121–139 (DRFVAICNPLLYTVTMSWK) lie on the Cytoplasmic side of the membrane. Residues 140-160 (VRVELASCCYFCGTVCSLIHL) traverse the membrane as a helical segment. At 161–196 (CLALRIPFYRSNVINHFFCDLPPVLSLACSDITVNE) the chain is on the extracellular side. An N-linked (GlcNAc...) asparagine glycan is attached at Asn-195. The chain crosses the membrane as a helical span at residues 197 to 217 (TLLFLVATLNESVTIMIILTS). Topologically, residues 218 to 237 (YLLILTTILKMGSAEGRHKA) are cytoplasmic. A helical membrane pass occupies residues 238 to 258 (FSTCASHLTAITVFHGTVLSI). The Extracellular portion of the chain corresponds to 259-271 (YCRPSSGNSGDAD). The helical transmembrane segment at 272–292 (KVATVFYTVVIPMLNSVIYSL) threads the bilayer. The Cytoplasmic portion of the chain corresponds to 293–311 (RNKDVKEALRKVMGSKIHS).

This sequence belongs to the G-protein coupled receptor 1 family.

The protein localises to the cell membrane. Odorant receptor. This Homo sapiens (Human) protein is Olfactory receptor 5L1 (OR5L1).